Consider the following 297-residue polypeptide: HTH-type transcriptional regulator ArgP (297 aa).

The region spanning 4–60 (PDYRTLQALDAVIRERGFERAAQKLCITQSAVSQRIKQLENMFGQPLLVRTVPPRPT) is the HTH lysR-type domain. A DNA-binding region (H-T-H motif) is located at residues 21 to 40 (FERAAQKLCITQSAVSQRIK).

The protein belongs to the LysR transcriptional regulatory family. As to quaternary structure, homodimer.

Its function is as follows. Controls the transcription of genes involved in arginine and lysine metabolism. The chain is HTH-type transcriptional regulator ArgP from Salmonella typhi.